A 176-amino-acid polypeptide reads, in one-letter code: Ribosome maturation factor RimM (176 aa).

The PRC barrel domain maps to 97–176 (EDEFYWRDLI…QILVDWDPDF (80 aa)).

Belongs to the RimM family. In terms of assembly, binds ribosomal protein uS19.

It is found in the cytoplasm. In terms of biological role, an accessory protein needed during the final step in the assembly of 30S ribosomal subunit, possibly for assembly of the head region. Essential for efficient processing of 16S rRNA. May be needed both before and after RbfA during the maturation of 16S rRNA. It has affinity for free ribosomal 30S subunits but not for 70S ribosomes. The sequence is that of Ribosome maturation factor RimM from Shewanella loihica (strain ATCC BAA-1088 / PV-4).